A 51-amino-acid polypeptide reads, in one-letter code: Large ribosomal subunit protein eL39 (51 aa).

The protein belongs to the eukaryotic ribosomal protein eL39 family.

The chain is Large ribosomal subunit protein eL39 from Thermococcus onnurineus (strain NA1).